The chain runs to 657 residues: Glycogen debranching enzyme (657 aa).

The active-site Nucleophile is aspartate 336. Residue glutamate 371 is the Proton donor of the active site. Basic and acidic residues predominate over residues 458 to 467 (NEANGEENRD). The interval 458–479 (NEANGEENRDGTNNNYSNNHGK) is disordered.

This sequence belongs to the glycosyl hydrolase 13 family.

It carries out the reaction Hydrolysis of (1-&gt;6)-alpha-D-glucosidic linkages to branches with degrees of polymerization of three or four glucose residues in limit dextrin.. It functions in the pathway glycan degradation; glycogen degradation. In terms of biological role, removes maltotriose and maltotetraose chains that are attached by 1,6-alpha-linkage to the limit dextrin main chain, generating a debranched limit dextrin. The sequence is that of Glycogen debranching enzyme from Shigella boydii serotype 18 (strain CDC 3083-94 / BS512).